The chain runs to 323 residues: tRNA U34 carboxymethyltransferase (323 aa).

Carboxy-S-adenosyl-L-methionine contacts are provided by residues Lys-91, Trp-105, Lys-110, Gly-130, 152 to 154 (DPT), 181 to 182 (IE), Met-196, Tyr-200, and Arg-315.

The protein belongs to the class I-like SAM-binding methyltransferase superfamily. CmoB family. As to quaternary structure, homotetramer.

It catalyses the reaction carboxy-S-adenosyl-L-methionine + 5-hydroxyuridine(34) in tRNA = 5-carboxymethoxyuridine(34) in tRNA + S-adenosyl-L-homocysteine + H(+). Its function is as follows. Catalyzes carboxymethyl transfer from carboxy-S-adenosyl-L-methionine (Cx-SAM) to 5-hydroxyuridine (ho5U) to form 5-carboxymethoxyuridine (cmo5U) at position 34 in tRNAs. The polypeptide is tRNA U34 carboxymethyltransferase (Escherichia coli O7:K1 (strain IAI39 / ExPEC)).